The primary structure comprises 131 residues: MRHRHGLRKLNRTSSHRLAMLRNMSNSLIEHEVIKTTLPKAKELRKVVEPLITLGKKPSLANRRLAFNRLRDRDSVAKLFDVLGPRFANRPGGYLRILKFGFRVGDNAPMALVELLDRPEVDETENVQEAE.

The protein belongs to the bacterial ribosomal protein bL17 family. In terms of assembly, part of the 50S ribosomal subunit. Contacts protein L32.

This chain is Large ribosomal subunit protein bL17, found in Burkholderia multivorans (strain ATCC 17616 / 249).